A 178-amino-acid polypeptide reads, in one-letter code: Large ribosomal subunit protein uL6 (178 aa).

This sequence belongs to the universal ribosomal protein uL6 family. As to quaternary structure, part of the 50S ribosomal subunit.

Its function is as follows. This protein binds to the 23S rRNA, and is important in its secondary structure. It is located near the subunit interface in the base of the L7/L12 stalk, and near the tRNA binding site of the peptidyltransferase center. This Frankia casuarinae (strain DSM 45818 / CECT 9043 / HFP020203 / CcI3) protein is Large ribosomal subunit protein uL6.